Here is a 318-residue protein sequence, read N- to C-terminus: Pantothenate kinase (318 aa).

An ATP-binding site is contributed by 96 to 103 (GSVSVGKS).

This sequence belongs to the prokaryotic pantothenate kinase family.

The protein resides in the cytoplasm. The enzyme catalyses (R)-pantothenate + ATP = (R)-4'-phosphopantothenate + ADP + H(+). It participates in cofactor biosynthesis; coenzyme A biosynthesis; CoA from (R)-pantothenate: step 1/5. In Bradyrhizobium sp. (strain ORS 278), this protein is Pantothenate kinase.